Here is a 730-residue protein sequence, read N- to C-terminus: Rap1 GTPase-activating protein 2 (730 aa).

A Rap-GAP domain is found at 247–463 (IVAYDEHEVN…RTRAALLDNL (217 aa)). Disordered stretches follow at residues 510-668 (MVGS…STAS) and 698-730 (SRSP…STSH). 2 stretches are compositionally biased toward polar residues: residues 535-557 (GEVT…QSRS) and 597-612 (HSSQ…NPSS). Over residues 617–630 (PNKDRPFVKLKENG) the composition is skewed to basic and acidic residues. The segment covering 631–651 (RSNISRSSSSTSSFSSTAGES) has biased composition (low complexity). Polar residues predominate over residues 699 to 712 (RSPTDIKNRNSPRS).

It localises to the cytoplasm. Functionally, GTPase activator for the nuclear Ras-related regulatory protein RAP-1A (KREV-1), converting it to the putatively inactive GDP-bound state. The polypeptide is Rap1 GTPase-activating protein 2 (RAP1GAP2) (Gallus gallus (Chicken)).